The following is a 74-amino-acid chain: Cecropin-P2 (74 aa).

An N-terminal signal peptide occupies residues 1 to 13 (MIFIYLLVQTAES). The propeptide at 45 to 74 (RRRFVVQQDTISPRLEVDERFLPNSVQEQI) is removed in mature form.

It belongs to the cecropin family. As to expression, expressed in the body wall, intestine, uterus and ovary.

The protein resides in the secreted. Functionally, has antibacterial activity against several Gram-positive and Gram-negative bacteria. Is weakly active against yeasts. Acts by a nonpore mechanism. In Ascaris suum (Pig roundworm), this protein is Cecropin-P2 (ASCEC-2).